Consider the following 201-residue polypeptide: Lipopolysaccharide core heptose(II)-phosphate phosphatase (201 aa).

An N-terminal signal peptide occupies residues 1 to 35; the sequence is MLAFTLRFIKNKRYLATLAGALVIIAGLTSQHAWS.

Belongs to the phosphoglycerate mutase family. Ais subfamily.

The protein localises to the periplasm. It functions in the pathway bacterial outer membrane biogenesis; lipopolysaccharide metabolism. Its function is as follows. Catalyzes the dephosphorylation of heptose(II) of the outer membrane lipopolysaccharide core. The protein is Lipopolysaccharide core heptose(II)-phosphate phosphatase of Salmonella newport (strain SL254).